Here is a 210-residue protein sequence, read N- to C-terminus: Ribosomal RNA large subunit methyltransferase E (210 aa).

Positions 55, 57, 75, 93, and 117 each coordinate S-adenosyl-L-methionine. Lys157 (proton acceptor) is an active-site residue. The segment at 175-210 is disordered; that stretch reads YRQVKTTKPPSSRKKSSEMYVVGLDFKPKKNKKSKD.

This sequence belongs to the class I-like SAM-binding methyltransferase superfamily. RNA methyltransferase RlmE family.

The protein localises to the cytoplasm. The enzyme catalyses uridine(2552) in 23S rRNA + S-adenosyl-L-methionine = 2'-O-methyluridine(2552) in 23S rRNA + S-adenosyl-L-homocysteine + H(+). In terms of biological role, specifically methylates the uridine in position 2552 of 23S rRNA at the 2'-O position of the ribose in the fully assembled 50S ribosomal subunit. The protein is Ribosomal RNA large subunit methyltransferase E of Methanobrevibacter smithii (strain ATCC 35061 / DSM 861 / OCM 144 / PS).